Consider the following 603-residue polypeptide: Probable methyltransferase PMT20 (603 aa).

The Cytoplasmic portion of the chain corresponds to 1-16 (MKSGKQSSQPEKGTSR). A helical; Signal-anchor for type II membrane protein membrane pass occupies residues 17–37 (ILSLTVLFIAFCGFSFYLGGI). The Lumenal segment spans residues 38 to 603 (FCSERDKIVA…KLWFSSNQTS (566 aa)). N313 and N600 each carry an N-linked (GlcNAc...) asparagine glycan.

The protein belongs to the methyltransferase superfamily.

The protein localises to the golgi apparatus membrane. In Arabidopsis thaliana (Mouse-ear cress), this protein is Probable methyltransferase PMT20.